Consider the following 98-residue polypeptide: NADH-ubiquinone oxidoreductase chain 4L (98 aa).

3 helical membrane passes run 1–21 (MSMVHMNIMMAFAVSLVGLLM), 29–49 (SLLCLEGMMLSLFVMAALTIL), and 61–81 (IILLVFAACEAALGLSLLVMV).

This sequence belongs to the complex I subunit 4L family. In terms of assembly, core subunit of respiratory chain NADH dehydrogenase (Complex I) which is composed of 45 different subunits.

The protein resides in the mitochondrion inner membrane. The catalysed reaction is a ubiquinone + NADH + 5 H(+)(in) = a ubiquinol + NAD(+) + 4 H(+)(out). Core subunit of the mitochondrial membrane respiratory chain NADH dehydrogenase (Complex I) which catalyzes electron transfer from NADH through the respiratory chain, using ubiquinone as an electron acceptor. Part of the enzyme membrane arm which is embedded in the lipid bilayer and involved in proton translocation. This is NADH-ubiquinone oxidoreductase chain 4L (MT-ND4L) from Bos mutus grunniens (Wild yak).